The primary structure comprises 663 residues: DNA ligase (663 aa).

Residues 34–38 (DYEYD), 83–84 (SL), and Glu-114 each bind NAD(+). Lys-116 serves as the catalytic N6-AMP-lysine intermediate. Positions 137, 171, 286, and 310 each coordinate NAD(+). Cys-404, Cys-407, Cys-422, and Cys-427 together coordinate Zn(2+). The BRCT domain occupies 585-663 (TVESPLTGKN…ADEFIKLANG (79 aa)).

Belongs to the NAD-dependent DNA ligase family. LigA subfamily. It depends on Mg(2+) as a cofactor. The cofactor is Mn(2+).

The enzyme catalyses NAD(+) + (deoxyribonucleotide)n-3'-hydroxyl + 5'-phospho-(deoxyribonucleotide)m = (deoxyribonucleotide)n+m + AMP + beta-nicotinamide D-nucleotide.. DNA ligase that catalyzes the formation of phosphodiester linkages between 5'-phosphoryl and 3'-hydroxyl groups in double-stranded DNA using NAD as a coenzyme and as the energy source for the reaction. It is essential for DNA replication and repair of damaged DNA. This is DNA ligase from Brachyspira hyodysenteriae (strain ATCC 49526 / WA1).